The chain runs to 264 residues: Phosphonoacetaldehyde hydrolase (264 aa).

Asp9 acts as the Nucleophile in catalysis. Residues Asp9 and Ala11 each coordinate Mg(2+). Residue Lys50 is the Schiff-base intermediate with substrate of the active site. Residue Asp183 coordinates Mg(2+).

Belongs to the HAD-like hydrolase superfamily. PhnX family. As to quaternary structure, homodimer. The cofactor is Mg(2+).

It carries out the reaction phosphonoacetaldehyde + H2O = acetaldehyde + phosphate + H(+). Involved in phosphonate degradation. This chain is Phosphonoacetaldehyde hydrolase, found in Bacillus cereus (strain ATCC 10987 / NRS 248).